A 367-amino-acid polypeptide reads, in one-letter code: 1-deoxy-D-xylulose 5-phosphate reductoisomerase (367 aa).

The NADPH site is built by T10, G11, S12, I13, G34, K35, N36, and N112. K113 serves as a coordination point for 1-deoxy-D-xylulose 5-phosphate. E114 lines the NADPH pocket. D138 lines the Mn(2+) pocket. Residues S139, E140, S164, and H186 each contribute to the 1-deoxy-D-xylulose 5-phosphate site. Position 140 (E140) interacts with Mn(2+). G192 contacts NADPH. 1-deoxy-D-xylulose 5-phosphate-binding residues include S199, N204, K205, and E208. A Mn(2+)-binding site is contributed by E208.

The protein belongs to the DXR family. The cofactor is Mg(2+). Mn(2+) is required as a cofactor.

It catalyses the reaction 2-C-methyl-D-erythritol 4-phosphate + NADP(+) = 1-deoxy-D-xylulose 5-phosphate + NADPH + H(+). It functions in the pathway isoprenoid biosynthesis; isopentenyl diphosphate biosynthesis via DXP pathway; isopentenyl diphosphate from 1-deoxy-D-xylulose 5-phosphate: step 1/6. In terms of biological role, catalyzes the NADPH-dependent rearrangement and reduction of 1-deoxy-D-xylulose-5-phosphate (DXP) to 2-C-methyl-D-erythritol 4-phosphate (MEP). This Thermus thermophilus (strain ATCC BAA-163 / DSM 7039 / HB27) protein is 1-deoxy-D-xylulose 5-phosphate reductoisomerase.